We begin with the raw amino-acid sequence, 442 residues long: NADH-quinone oxidoreductase subunit D (442 aa).

It belongs to the complex I 49 kDa subunit family. In terms of assembly, NDH-1 is composed of 14 different subunits. Subunits NuoB, C, D, E, F, and G constitute the peripheral sector of the complex.

The protein resides in the cell membrane. The enzyme catalyses a quinone + NADH + 5 H(+)(in) = a quinol + NAD(+) + 4 H(+)(out). In terms of biological role, NDH-1 shuttles electrons from NADH, via FMN and iron-sulfur (Fe-S) centers, to quinones in the respiratory chain. The immediate electron acceptor for the enzyme in this species is believed to be a menaquinone. Couples the redox reaction to proton translocation (for every two electrons transferred, four hydrogen ions are translocated across the cytoplasmic membrane), and thus conserves the redox energy in a proton gradient. The protein is NADH-quinone oxidoreductase subunit D of Mycolicibacterium smegmatis (strain ATCC 700084 / mc(2)155) (Mycobacterium smegmatis).